The following is a 290-amino-acid chain: Transmembrane protein 33 homolog (290 aa).

2 disordered regions span residues 1–22 and 39–72; these read MSSP…EFTG and IDPN…SPRA. Residues 45 to 72 are compositionally biased toward low complexity; it reads SSNNTTTQRPSTSSSSRTSSSSTSSPRA. 4 helical membrane-spanning segments follow: residues 83–103, 109–129, 150–170, and 218–238; these read LYGA…FYFI, FFYK…FNTF, FVFY…YLLP, and IVLI…LVFI.

The protein belongs to the PER33/POM33 family.

The protein resides in the membrane. The polypeptide is Transmembrane protein 33 homolog (tmem33) (Dictyostelium discoideum (Social amoeba)).